Here is a 376-residue protein sequence, read N- to C-terminus: GDSL esterase/lipase 2 (376 aa).

The signal sequence occupies residues 1 to 25 (MENSRSTLIIFFAYTTIILIGSINC). Residue Asn-36 is glycosylated (N-linked (GlcNAc...) asparagine). Ser-46 (nucleophile) is an active-site residue. Asn-186 and Asn-205 each carry an N-linked (GlcNAc...) asparagine glycan. Active-site residues include Asp-340 and His-343. Asn-362 carries an N-linked (GlcNAc...) asparagine glycan.

Belongs to the 'GDSL' lipolytic enzyme family. Expressed seedlings, roots and stems.

Its subcellular location is the secreted. In terms of biological role, involved in the resistance to the necrotropic bacteria Erwinia carotovora, probably via negative regulation of auxin signaling. Possesses lipase and antimicrobial activities, inhibiting germination of fungal spores (e.g. Alternaria brassicicola). The chain is GDSL esterase/lipase 2 (GLIP2) from Arabidopsis thaliana (Mouse-ear cress).